A 212-amino-acid chain; its full sequence is Prolactin (212 aa).

A signal peptide spans 1 to 24; the sequence is MAHRETNGSKLFITVLCMVAACSA. 2 cysteine pairs are disulfide-bonded: Cys-70-Cys-185 and Cys-202-Cys-212.

Belongs to the somatotropin/prolactin family.

It is found in the secreted. The sequence is that of Prolactin (prl) from Sparus aurata (Gilthead sea bream).